The sequence spans 1400 residues: DNA-directed RNA polymerase subunit beta' (1400 aa).

Cys-71, Cys-73, Cys-86, and Cys-89 together coordinate Zn(2+). Positions 462, 464, and 466 each coordinate Mg(2+). Zn(2+)-binding residues include Cys-810, Cys-884, Cys-891, and Cys-894. A disordered region spans residues 1377–1400 (REKQATIVPPAAPEAEPLALPPVE).

It belongs to the RNA polymerase beta' chain family. As to quaternary structure, the RNAP catalytic core consists of 2 alpha, 1 beta, 1 beta' and 1 omega subunit. When a sigma factor is associated with the core the holoenzyme is formed, which can initiate transcription. Mg(2+) serves as cofactor. The cofactor is Zn(2+).

The enzyme catalyses RNA(n) + a ribonucleoside 5'-triphosphate = RNA(n+1) + diphosphate. Functionally, DNA-dependent RNA polymerase catalyzes the transcription of DNA into RNA using the four ribonucleoside triphosphates as substrates. This Rhodopseudomonas palustris (strain HaA2) protein is DNA-directed RNA polymerase subunit beta'.